The primary structure comprises 287 residues: 4-hydroxybenzoate octaprenyltransferase (287 aa).

A run of 6 helical transmembrane segments spans residues 41-61 (WPLLVIFTLGTLLMRSAGCAM), 89-109 (WEAVAIAVGLSFIAFLLILPL), 133-153 (FFAIPQAYLGIAFGFGIPMAF), 158-178 (DTVPMLAWVMLVANIFWSVAY), 202-224 (FGRFDVAAVMACYAATLGIYVWI), and 266-286 (HNNWLGGVLFAGIAVHYLLAG).

Belongs to the UbiA prenyltransferase family. Mg(2+) serves as cofactor.

It localises to the cell inner membrane. It catalyses the reaction all-trans-octaprenyl diphosphate + 4-hydroxybenzoate = 4-hydroxy-3-(all-trans-octaprenyl)benzoate + diphosphate. The protein operates within cofactor biosynthesis; ubiquinone biosynthesis. In terms of biological role, catalyzes the prenylation of para-hydroxybenzoate (PHB) with an all-trans polyprenyl group. Mediates the second step in the final reaction sequence of ubiquinone-8 (UQ-8) biosynthesis, which is the condensation of the polyisoprenoid side chain with PHB, generating the first membrane-bound Q intermediate 3-octaprenyl-4-hydroxybenzoate. In Burkholderia orbicola (strain MC0-3), this protein is 4-hydroxybenzoate octaprenyltransferase.